Reading from the N-terminus, the 1041-residue chain is Isoleucine--tRNA ligase (1041 aa).

Residues 53–63 (PFANGLPHYGH) carry the 'HIGH' region motif. Positions 619-623 (KMSKS) match the 'KMSKS' region motif. K622 lines the ATP pocket.

The protein belongs to the class-I aminoacyl-tRNA synthetase family. IleS type 2 subfamily. As to quaternary structure, monomer. Zn(2+) is required as a cofactor.

The protein resides in the cytoplasm. It carries out the reaction tRNA(Ile) + L-isoleucine + ATP = L-isoleucyl-tRNA(Ile) + AMP + diphosphate. Catalyzes the attachment of isoleucine to tRNA(Ile). As IleRS can inadvertently accommodate and process structurally similar amino acids such as valine, to avoid such errors it has two additional distinct tRNA(Ile)-dependent editing activities. One activity is designated as 'pretransfer' editing and involves the hydrolysis of activated Val-AMP. The other activity is designated 'posttransfer' editing and involves deacylation of mischarged Val-tRNA(Ile). The sequence is that of Isoleucine--tRNA ligase from Mycobacterium bovis (strain ATCC BAA-935 / AF2122/97).